Here is a 20-residue protein sequence, read N- to C-terminus: Fibrinolytic zinc metalloproteinase (20 aa).

Residues 7-20 (RYVQLVITVDHVMN) enclose the Peptidase M12B domain.

Zn(2+) serves as cofactor.

It is found in the secreted. Hydrolyzes alpha and beta chains of human fibrinogen and human fibrin. No activity against the gamma chain of human fibrinogen, human thrombin, bovine serum albumin, ovalbumin and hemoglobin. Has anticoagulant activity on human plasma and protects mice against death due from experimentally induced platelet thromboembolism with an ED(50) of 40 ug/kg. The polypeptide is Fibrinolytic zinc metalloproteinase (Ganoderma lucidum (Ling zhi medicinal fungus)).